The sequence spans 122 residues: Large ribosomal subunit protein bL12 (122 aa).

Belongs to the bacterial ribosomal protein bL12 family. In terms of assembly, homodimer. Part of the ribosomal stalk of the 50S ribosomal subunit. Forms a multimeric L10(L12)X complex, where L10 forms an elongated spine to which 2 to 4 L12 dimers bind in a sequential fashion. Binds GTP-bound translation factors.

Forms part of the ribosomal stalk which helps the ribosome interact with GTP-bound translation factors. Is thus essential for accurate translation. The protein is Large ribosomal subunit protein bL12 of Aliivibrio fischeri (strain ATCC 700601 / ES114) (Vibrio fischeri).